The sequence spans 843 residues: Protein PLASTID MOVEMENT IMPAIRED 1 (843 aa).

Over residues 30 to 58 the composition is skewed to polar residues; that stretch reads PQVSVGNRRTNSLALPRSSVPSLVTSADE. Disordered stretches follow at residues 30-65 and 88-116; these read PQVS…ARAE and LEVE…SGVK. The C2 NT-type domain occupies 131-284; that stretch reads LVRIGMQKLS…ELALKLGFQI (154 aa). 2 disordered regions span residues 300 to 412 and 450 to 472; these read FGMK…GTIG and MMKD…EEEQ. Residues 307–336 are compositionally biased toward polar residues; it reads KPKNFANSFGRKQSKTSFSVPSPKMTSRSE. Phosphoserine is present on residues Ser-314 and Ser-328. Residues 365 to 381 are compositionally biased toward basic and acidic residues; the sequence is PEEKPVQKNDKPEQRAE. Thr-404 is modified (phosphothreonine). Residue Ser-407 is modified to Phosphoserine. At Thr-410 the chain carries Phosphothreonine. A compositionally biased stretch (acidic residues) spans 456–472; sequence DGGDGETESQRLDEEEQ. Ser-507 carries the phosphoserine modification.

Expressed in leaves, stems, cauline leaves, and flowers but not in roots. Present in leaves in both mesophyll and pavement cells.

The protein localises to the cytoplasm. Its function is as follows. Necessary for chloroplast and nuclear photorelocation movements via the regulation of chloroplast-actin (cp-actin) filaments in mesophyll cells, and together with PMIR1, in pavement cells. Required component for both the low- and high-light-dependent chloroplast movement responses via an abscisic acid (ABA) pathway. Involved in the ABA response pathway during seed germination. Modulates ABA accumulation during periods of water deficit at the seedling stage. In Arabidopsis thaliana (Mouse-ear cress), this protein is Protein PLASTID MOVEMENT IMPAIRED 1.